The chain runs to 167 residues: Small ribosomal subunit protein uS5 (167 aa).

Residues Leu12 to Ile75 form the S5 DRBM domain.

Belongs to the universal ribosomal protein uS5 family. As to quaternary structure, part of the 30S ribosomal subunit. Contacts proteins S4 and S8.

With S4 and S12 plays an important role in translational accuracy. In terms of biological role, located at the back of the 30S subunit body where it stabilizes the conformation of the head with respect to the body. The sequence is that of Small ribosomal subunit protein uS5 from Vibrio cholerae serotype O1 (strain ATCC 39541 / Classical Ogawa 395 / O395).